The chain runs to 284 residues: RNase adapter protein RapZ (284 aa).

Glycine 8 to serine 15 is an ATP binding site. Aspartate 56 to asparagine 59 is a binding site for GTP. The tract at residues arginine 266 to glutamate 284 is RNA-binding.

It belongs to the RapZ-like family. RapZ subfamily. As to quaternary structure, homotrimer.

Its function is as follows. Modulates the synthesis of GlmS, by affecting the processing and stability of the regulatory small RNA GlmZ. When glucosamine-6-phosphate (GlcN6P) concentrations are high in the cell, RapZ binds GlmZ and targets it to cleavage by RNase E. Consequently, GlmZ is inactivated and unable to activate GlmS synthesis. Under low GlcN6P concentrations, RapZ is sequestered and inactivated by an other regulatory small RNA, GlmY, preventing GlmZ degradation and leading to synthesis of GlmS. In Hamiltonella defensa subsp. Acyrthosiphon pisum (strain 5AT), this protein is RNase adapter protein RapZ.